Reading from the N-terminus, the 393-residue chain is Cholinephosphotransferase 1 (393 aa).

At 1–40 (MGFFIPQSSLGNLKLYKYQSDDRSFLSNHVLRPFWRKFAT) the chain is on the lumenal side. A helical membrane pass occupies residues 41 to 61 (IFPLWMAPNLVTLLGFCFIIF). The Cytoplasmic segment spans residues 62–172 (NVLTTLYYDP…YHTHKLYLAE (111 aa)). The chain crosses the membrane as a helical span at residues 173-193 (FCGPVEGIIVLCISFIAVGIY). The Lumenal portion of the chain corresponds to 194–210 (GPQTIWHTKVAQFSWQD). Residues 211-231 (FVFDVETVHLMYAFCTGALIF) form a helical membrane-spanning segment. The Cytoplasmic segment spans residues 232-263 (NIVTAHTNVVRYYESQSTKSATPSKTAENISK). Residues 264 to 284 (AVNGLLPFFAYFSSIFTLVLI) form a helical membrane-spanning segment. A topological domain (lumenal) is located at residue Q285. A helical transmembrane segment spans residues 286 to 306 (PSFISLALILSIGFSVAFVVG). The Cytoplasmic portion of the chain corresponds to 307–320 (RMIIAHLTMQPFPM). The helical transmembrane segment at 321–341 (VNFPFLIPTIQLVLYAFMVYV) threads the bilayer. Topologically, residues 342 to 348 (LDYQKGS) are lumenal. Residues 349–369 (IVSALVWMGLGLTLAIHGMFI) form a helical membrane-spanning segment. At 370–393 (NDIIYDITTFLDIYALSIKHPKEI) the chain is on the cytoplasmic side.

The protein belongs to the CDP-alcohol phosphatidyltransferase class-I family. Requires Mg(2+) as cofactor.

The protein resides in the microsome membrane. It localises to the endoplasmic reticulum membrane. It is found in the mitochondrion outer membrane. The enzyme catalyses CDP-choline + a 1,2-diacyl-sn-glycerol = a 1,2-diacyl-sn-glycero-3-phosphocholine + CMP + H(+). It catalyses the reaction CDP-N,N-dimethylethanolamine + a 1,2-diacyl-sn-glycerol = a 1,2-diacyl-sn-glycero-3-phospho-N,N-dimethylethanolamine + CMP + H(+). Its pathway is phospholipid metabolism; phosphatidylcholine biosynthesis; phosphatidylcholine from phosphocholine: step 2/2. Requires a divalent cation activator, and is inhibited by CMP. Activated by phospholipids, especially phosphatidylcholine. Catalyzes the final step in the CDP-choline route leading to phosphatidylcholin (PC). Preferentially uses CDP-monomethylethanolamine as aminoalcohol substrate. Shows highest activity toward di- and mono-unsaturated diacylglycerol species as lipid substrates. The CDP-choline pathway only contributes to net PC synthesis if exogenous choline is present. In its absence, this pathway recycles choline from PC turnover and may contribute to maintaining the proper PC species composition. This chain is Cholinephosphotransferase 1 (CPT1), found in Saccharomyces cerevisiae (strain ATCC 204508 / S288c) (Baker's yeast).